The sequence spans 252 residues: Fructose-1,6-bisphosphatase/inositol-1-monophosphatase (252 aa).

Mg(2+) is bound by residues Glu-65, Asp-81, Ile-83, and Asp-84. Residues 84-86, Arg-170, Phe-175, and Arg-194 each bind substrate; that span reads DGS. Asp-201 contacts Mg(2+).

Belongs to the inositol monophosphatase superfamily. FBPase class 4 family. As to quaternary structure, homodimer. The cofactor is Mg(2+).

The catalysed reaction is beta-D-fructose 1,6-bisphosphate + H2O = beta-D-fructose 6-phosphate + phosphate. It catalyses the reaction a myo-inositol phosphate + H2O = myo-inositol + phosphate. Its activity is regulated as follows. IMPase activity is inhibited by Ca(2+) and Zn(2+). In contrast to mammalian I-1-P phosphatases, is not inhibited by Li(+) up to 100 mM. Its function is as follows. Phosphatase with broad specificity; it can dephosphorylate fructose 1,6-bisphosphate, both D and L isomers of inositol-1-phosphate (I-1-P), 2'-AMP, pNPP, beta-glycerol phosphate, and alpha-D-glucose-1-phosphate. Cannot hydrolyze glucose-6-phosphate, fructose-6-phosphate, NAD(+) or 5'-AMP. May be involved in the biosynthesis of a unique osmolyte, di-myo-inositol 1,1-phosphate. This is Fructose-1,6-bisphosphatase/inositol-1-monophosphatase (suhB) from Methanocaldococcus jannaschii (strain ATCC 43067 / DSM 2661 / JAL-1 / JCM 10045 / NBRC 100440) (Methanococcus jannaschii).